The sequence spans 402 residues: mRNA-capping enzyme subunit alpha (402 aa).

The active-site N6-GMP-lysine intermediate is the Lys67. Positions 374–402 (SVTKRKLDETSNDDAPAIKKVAKESEKEI) are disordered.

The protein belongs to the eukaryotic GTase family. As to quaternary structure, heterodimer. The mRNA-capping enzyme is composed of two separate chains alpha and beta, respectively a mRNA guanylyltransferase and an mRNA 5'-triphosphate monophosphatase.

It localises to the nucleus. It carries out the reaction a 5'-end diphospho-ribonucleoside in mRNA + GTP + H(+) = a 5'-end (5'-triphosphoguanosine)-ribonucleoside in mRNA + diphosphate. Functionally, second step of mRNA capping. Transfer of the GMP moiety of GTP to the 5'-end of RNA via an enzyme-GMP covalent reaction intermediate. This is mRNA-capping enzyme subunit alpha (ceg1) from Schizosaccharomyces pombe (strain 972 / ATCC 24843) (Fission yeast).